Consider the following 1448-residue polypeptide: Probable serine/threonine-protein kinase irlB (1448 aa).

Residues 412 to 423 show a composition bias toward acidic residues; the sequence is DDDDYDDYDDDD. Positions 412–446 are disordered; sequence DDDDYDDYDDDDDHHSGCNNNNNNNNDGDHNEDEN. The segment covering 428–437 has biased composition (low complexity); sequence GCNNNNNNNN. Coiled-coil stretches lie at residues 666 to 817, 887 to 921, and 974 to 1016; these read AESE…EIQN, EIQLEEENQKKKEMETIDEYEEININKKQINSNMK, and ENNK…QDED. Residues 975 to 1008 are disordered; the sequence is NNKKQNLINDNNNNNNNNNNNNNNNNNNNNNNKL. A compositionally biased stretch (low complexity) spans 978-1008; sequence KQNLINDNNNNNNNNNNNNNNNNNNNNNNKL. Positions 1027–1293 constitute a Protein kinase domain; that stretch reads RNESNILGRG…IQNVLNHPLF (267 aa). ATP is bound by residues 1033–1041 and Lys1056; that span reads LGRGSNGTL. Residue Asp1151 is the Proton acceptor of the active site. One can recognise a KEN domain in the interval 1296–1448; sequence LEKKIQFIDA…TIDYLFNFYN (153 aa).

The protein belongs to the protein kinase superfamily. Ser/Thr protein kinase family.

The enzyme catalyses L-seryl-[protein] + ATP = O-phospho-L-seryl-[protein] + ADP + H(+). The catalysed reaction is L-threonyl-[protein] + ATP = O-phospho-L-threonyl-[protein] + ADP + H(+). This Dictyostelium discoideum (Social amoeba) protein is Probable serine/threonine-protein kinase irlB (irlB-1).